The sequence spans 593 residues: Autophagy-related protein 22-2 (593 aa).

A helical transmembrane segment spans residues 42 to 62 (YGVAAEVFAVCGVGSFLPLTL). An N-linked (GlcNAc...) asparagine glycan is attached at Asn90. 3 helical membrane-spanning segments follow: residues 112–132 (SFAMYTFSLAVLIQALTLVSF), 159–179 (LFMLIVPPVFVLGALLVVIGV), and 181–201 (CLGSSFVVLNSFLPILVANDP). The segment at 228 to 261 (SWTDEEDTGDHAGPAGSKKAVEPEKASSSTSPEL) is disordered. Transmembrane regions (helical) follow at residues 271-291 (GVGLGYCAAVLVQILSILLLF), 305-325 (LPLRFVLLLVGIWWAAFTVVC), 377-397 (VVVFLAAWFLISDAIATVSGT), and 415-435 (LLSITATMSGMAGAFLWPIVA). Asn443 carries N-linked (GlcNAc...) asparagine glycosylation. Transmembrane regions (helical) follow at residues 448–468 (LCIALFEIIPLYGMLAYIPFI), 480–500 (WEIFPLGIVHGVVSGGLASYC), 525–545 (KGSSFVGPAIVGALIDATGSV), and 548–568 (GFIFIGVLILLPMPLVWLVNA).

Belongs to the ATG22 family.

It localises to the vacuole membrane. Its function is as follows. Vacuolar effluxer which mediate the efflux of amino acids resulting from autophagic degradation. The release of autophagic amino acids allows the maintenance of protein synthesis and viability during nitrogen starvation. The chain is Autophagy-related protein 22-2 (atg22-2) from Emericella nidulans (strain FGSC A4 / ATCC 38163 / CBS 112.46 / NRRL 194 / M139) (Aspergillus nidulans).